The chain runs to 120 residues: Host cell factor C1 regulator 1 (120 aa).

The segment at 1–30 (MILQQPLERGPPSRDPRATTGVTRGLNASL) is disordered. The span at 20–30 (TGVTRGLNASL) shows a compositional bias: polar residues. The interaction with HCFC1 stretch occupies residues 58–61 (DHPY). A Nuclear export signal motif is present at residues 92-101 (IPEALRLLRL).

Interacts with HCFC1.

The protein resides in the cytoplasm. The protein localises to the nucleus. Functionally, regulates HCFC1 activity by modulating its subcellular localization. Overexpression of HCFC1R1 leads to accumulation of HCFC1 in the cytoplasm. HCFC1R1-mediated export may provide the pool of cytoplasmic HCFC1 required for import of virion-derived VP16 into the nucleus. This chain is Host cell factor C1 regulator 1 (Hcfc1r1), found in Mus musculus (Mouse).